Consider the following 138-residue polypeptide: Large ribosomal subunit protein uL16 (138 aa).

Positions 1–15 (MLSPKKVKYRKKQRG) are enriched in basic residues. The tract at residues 1-21 (MLSPKKVKYRKKQRGRLSGEA) is disordered.

This sequence belongs to the universal ribosomal protein uL16 family. In terms of assembly, part of the 50S ribosomal subunit.

Its function is as follows. Binds 23S rRNA and is also seen to make contacts with the A and possibly P site tRNAs. This Borreliella burgdorferi (strain ATCC 35210 / DSM 4680 / CIP 102532 / B31) (Borrelia burgdorferi) protein is Large ribosomal subunit protein uL16.